The chain runs to 104 residues: Pyrimidine/purine nucleoside phosphorylase (104 aa).

It belongs to the nucleoside phosphorylase PpnP family.

The enzyme catalyses a purine D-ribonucleoside + phosphate = a purine nucleobase + alpha-D-ribose 1-phosphate. The catalysed reaction is adenosine + phosphate = alpha-D-ribose 1-phosphate + adenine. It catalyses the reaction cytidine + phosphate = cytosine + alpha-D-ribose 1-phosphate. It carries out the reaction guanosine + phosphate = alpha-D-ribose 1-phosphate + guanine. The enzyme catalyses inosine + phosphate = alpha-D-ribose 1-phosphate + hypoxanthine. The catalysed reaction is thymidine + phosphate = 2-deoxy-alpha-D-ribose 1-phosphate + thymine. It catalyses the reaction uridine + phosphate = alpha-D-ribose 1-phosphate + uracil. It carries out the reaction xanthosine + phosphate = alpha-D-ribose 1-phosphate + xanthine. Catalyzes the phosphorolysis of diverse nucleosides, yielding D-ribose 1-phosphate and the respective free bases. Can use uridine, adenosine, guanosine, cytidine, thymidine, inosine and xanthosine as substrates. Also catalyzes the reverse reactions. This Geotalea daltonii (strain DSM 22248 / JCM 15807 / FRC-32) (Geobacter daltonii) protein is Pyrimidine/purine nucleoside phosphorylase.